The chain runs to 116 residues: M-zodatoxin-Lt6a/b (116 aa).

The signal sequence occupies residues 1 to 22; sequence MKYFVVALTLAVAFVCIEECKT. 2 consecutive propeptides follow at residues 23–44 and 80–83; these read VEIG…EEAR and EEAR. Short sequence motifs (processing quadruplet motif) lie at residues 41–44 and 80–83; these read EEAR. Gln84 carries the pyrrolidone carboxylic acid modification.

Belongs to the cationic peptide 03 (latarcin) family. 06 subfamily. Post-translationally, cleavage of the propeptide depends on the processing quadruplet motif (XXXR, with at least one of X being E). Expressed by the venom gland.

It is found in the secreted. In terms of biological role, does not have antimicrobial activity against neither Gram-positive bacteria (A.globiformis VKM Ac-1112 (MIC&gt;70 uM), and B.subtilis VKM B-501 (MIC&gt;70 uM)), nor Gram-negative bacteria (E.coli DH5-alpha (MIC&gt;70 uM), E.coli MH1 (MIC&gt;70 uM), and P.aeruginosa PAO1 (MIC&gt;70 uM)), nor yeasts (P.pastoris GS115 (MIC&gt;70 uM), and S.cerevisiae Y190 (MIC&gt;70 uM)). Does not have hemolytic activity against rabbit erythrocytes. However, it causes some conductance changes in planar bilayer membranes, without membrane rupture, suggesting a cytolytic function on other biological targets. It causes paralysis, but is not lethal when injected into insect (M.domestica) larvae. This Lachesana tarabaevi (Spider) protein is M-zodatoxin-Lt6a/b.